The sequence spans 122 residues: uncharacterized protein (122 aa).

This is an uncharacterized protein from Escherichia coli (strain K12).